The chain runs to 319 residues: MAAAAAAAAAEQQSSNGPVKKSMREKAVERRNVNKEHNSNFKAGYIPIDEDRLHKTGLRGRKGNLAICVIILLFILAVINLIITLVIWAVIRIGPNGCDSMEFHESGLLRFKQVSDMGVIHPLYKSTVGGRRNENLVITGNNQPIVFQQGTTKLSVENNKTSITSDIGMQFFDPRTQNILFSTDYETHEFHLPSGVKSLNVQKASTERITSNATSDLNIKVDGRAIVRGNEGVFIMGKTIEFHMGGNMELKAENSIILNGSVMVSTTRLPSSSSGDQLGSGDWVRYKLCMCADGTLFKVQVTSQNMGCQISDNPCGNTH.

Residues Met-1 to Ala-10 show a composition bias toward low complexity. A disordered region spans residues Met-1–Val-33. The Cytoplasmic segment spans residues Met-1–Ala-66. A compositionally biased stretch (basic and acidic residues) spans Ser-22 to Val-33. A helical; Signal-anchor for type II membrane protein transmembrane segment spans residues Ile-67–Ile-87. The Extracellular segment spans residues Trp-88–Thr-318. N-linked (GlcNAc...) asparagine glycans are attached at residues Asn-159, Asn-212, and Asn-259. 2 cysteine pairs are disulfide-bonded: Cys-289–Cys-315 and Cys-291–Cys-308.

This sequence belongs to the sarcoglycan beta/delta/gamma/zeta family. As to quaternary structure, cross-link to form 2 major subcomplexes: one consisting of SGCB, SGCD and SGCG and the other consisting of SGCB and SGCD. The association between SGCB and SGCG is particularly strong while SGCA is loosely associated with the other sarcoglycans. Post-translationally, disulfide bonds are present.

Its subcellular location is the cell membrane. The protein resides in the sarcolemma. It is found in the cytoplasm. The protein localises to the cytoskeleton. Functionally, component of the sarcoglycan complex, a subcomplex of the dystrophin-glycoprotein complex which forms a link between the F-actin cytoskeleton and the extracellular matrix. In Pongo abelii (Sumatran orangutan), this protein is Beta-sarcoglycan (SGCB).